Consider the following 288-residue polypeptide: UAP56-interacting factor (288 aa).

Residues Thr11–Glu29 carry the UAP56-binding motif motif. The tract at residues Asp183 to Ser202 is disordered.

Belongs to the UIF family.

The protein localises to the nucleus. The protein resides in the nucleoplasm. It is found in the nucleus speckle. Its function is as follows. Required for mRNA export from the nucleus to the cytoplasm. Acts as an adapter that uses the ddx39b/uap56-nfx1 pathway to ensure efficient mRNA export and delivering to the nuclear pore. This Xenopus laevis (African clawed frog) protein is UAP56-interacting factor (fyttd1).